Reading from the N-terminus, the 185-residue chain is MISVNDFRTGLTISVDNALWQVLDFQHVKPGKGAAFVRSKLRNIRTGSVQEKTFRAGEKVEKAHIENRRMQYLYASGEAHVFMDNGTYEQIELGEKQIERELKFLKENMEVAIMTYQGEVLGVELPNTVELQVTETEPGIKGDTASNVTKPATLETGLVVQVPIFINEGEMLIINTGEGKYVSRA.

It belongs to the elongation factor P family.

It localises to the cytoplasm. Its pathway is protein biosynthesis; polypeptide chain elongation. Involved in peptide bond synthesis. Stimulates efficient translation and peptide-bond synthesis on native or reconstituted 70S ribosomes in vitro. Probably functions indirectly by altering the affinity of the ribosome for aminoacyl-tRNA, thus increasing their reactivity as acceptors for peptidyl transferase. The protein is Elongation factor P of Bacillus cereus (strain G9842).